The primary structure comprises 473 residues: Glutamate--tRNA ligase 1 (473 aa).

The 'HIGH' region motif lies at 23-33 (PSPTGLLHVGG). A 'KMSKS' region motif is present at residues 252-256 (KLSKR). Residue Lys255 coordinates ATP.

Belongs to the class-I aminoacyl-tRNA synthetase family. Glutamate--tRNA ligase type 1 subfamily. As to quaternary structure, monomer.

Its subcellular location is the cytoplasm. It catalyses the reaction tRNA(Glu) + L-glutamate + ATP = L-glutamyl-tRNA(Glu) + AMP + diphosphate. In terms of biological role, catalyzes the attachment of glutamate to tRNA(Glu) in a two-step reaction: glutamate is first activated by ATP to form Glu-AMP and then transferred to the acceptor end of tRNA(Glu). This Granulibacter bethesdensis (strain ATCC BAA-1260 / CGDNIH1) protein is Glutamate--tRNA ligase 1.